The primary structure comprises 346 residues: UPF0283 membrane protein VP1870 (346 aa).

Residues 1–30 (MSELKQKQIFSEKALEKEQQSDSPELTAQK) form a disordered region. Residues 21 to 30 (SDSPELTAQK) show a composition bias toward polar residues. Helical transmembrane passes span 73–93 (VFAT…VTAV) and 98–118 (WLAL…LGAI).

The protein belongs to the UPF0283 family.

Its subcellular location is the cell inner membrane. The protein is UPF0283 membrane protein VP1870 of Vibrio parahaemolyticus serotype O3:K6 (strain RIMD 2210633).